We begin with the raw amino-acid sequence, 627 residues long: Neuronal acetylcholine receptor subunit alpha-4 (627 aa).

The N-terminal stretch at 1–28 (MELGGPGAPRLLPPLLLLLGTGLLRASS) is a signal peptide. The Extracellular segment spans residues 29-242 (HVETRAHAEE…ITYAFVIRRL (214 aa)). Asn57 carries N-linked (GlcNAc...) asparagine glycosylation. Ca(2+) is bound by residues Val76 and Glu78. Residues Asn107 and Asn174 are each glycosylated (N-linked (GlcNAc...) asparagine). 2 disulfide bridges follow: Cys161/Cys175 and Cys225/Cys226. The chain crosses the membrane as a helical span at residues 243-267 (PLFYTINLIIPCLLISCLTVLVFYL). Residue Cys271 is the site of S-palmitoyl cysteine attachment. A run of 2 helical transmembrane segments spans residues 275–293 (ITLC…LLIT) and 309–330 (YLLF…VLNV). Residues 331 to 600 (HHRSPRTHTM…WKYVAMVIDR (270 aa)) are Cytoplasmic-facing. Disordered stretches follow at residues 382 to 479 (PRFW…EAVE) and 497 to 559 (DATS…RHLP). Phosphoserine occurs at positions 424, 538, and 541. A helical transmembrane segment spans residues 601–619 (IFLWMFIIVCLLGTVGLFL).

Belongs to the ligand-gated ion channel (TC 1.A.9) family. Acetylcholine receptor (TC 1.A.9.1) subfamily. Alpha-4/CHRNA4 sub-subfamily. Neuronal AChR is composed of two different types of subunits: alpha and beta. CHRNA4 forms heteropentameric neuronal acetylcholine receptors with CHRNB2 and CHRNB4, as well as CHRNA5 and CHRNB3 as accesory subunits. Found in two major stoichiometric forms, LS (low agonist sensitivity): (CHRNA4)3:(CHRNB2)2 and HS (high agonist sensitivity): (CHRNA4)2:(CHRNB2)3, the two stoichiometric forms differ in their unitary conductance, calcium permeability, ACh sensitivity and potentiation by divalent cation. Cells produce predominantly an (CHRNA4)3:(CHRNB2)2 nAChR. The (CHRNA4)2:(CHRNB2)3 expression is selectively up-regulated by nicotine and has lower single channel conductance and calcium permeability. In the striatum, also forms CHRNA4:CHRNA6:CHRNB2 complexes. Also found in the stoichiometric form: (CHRNA4:CHRNB2)2:CHRNB3. Interacts with RIC3; which is required for proper folding and assembly. Interacts with LYPD6.

Its subcellular location is the synaptic cell membrane. It localises to the cell membrane. It carries out the reaction Ca(2+)(in) = Ca(2+)(out). The enzyme catalyses K(+)(in) = K(+)(out). The catalysed reaction is Na(+)(in) = Na(+)(out). Activated by a myriad of ligands such as acetylcholine, cytisine, nicotine, choline and epibatidine. Channel potentiation by calcium is stoichiometry-selective, CHRNA4:CHRNB2 nACh receptor is achieved by calcium association with topographically distinct sites framed by anionic residues within the CHRNA4 subunit and between the CHRNA4 and CHRNB2 subunits. nAChR activity is inhibited by the antagonist alpha-conotoxins BuIA, PnIA, GID and MII, small disulfide-constrained peptides from cone snails. In terms of biological role, component of neuronal acetylcholine receptors (nAChRs) that function as pentameric, ligand-gated cation channels with high calcium permeability among other activities. nAChRs are excitatory neurotrasnmitter receptors formed by a collection of nAChR subunits known to mediate synaptic transmission in the nervous system and the neuromuscular junction. Each nAchR subunit confers differential attributes to channel properties, including activation, deactivation and desensitization kinetics, pH sensitivity, cation permeability, and binding to allosteric modulators. CHRNA4 forms heteropentameric neuronal acetylcholine receptors with CHRNB2 and CHRNB4, as well as CHRNA5 and CHRNB3 as accesory subunits. Is the most abundant nAChR subtype expressed in the central nervous system. Found in two major stoichiometric forms,(CHRNA4)3:(CHRNB2)2 and (CHRNA4)2:(CHRNB2)3, the two stoichiometric forms differ in their unitary conductance, calcium permeability, ACh sensitivity and potentiation by divalent cation. Involved in the modulation of calcium-dependent signaling pathways, influences the release of neurotransmitters, including dopamine, glutamate and GABA. In Pan troglodytes (Chimpanzee), this protein is Neuronal acetylcholine receptor subunit alpha-4 (CHRNA4).